A 761-amino-acid polypeptide reads, in one-letter code: Isocyanide synthase xanB (761 aa).

The segment at Leu-24–His-128 is disordered. Residues Glu-36 to Glu-48 are compositionally biased toward low complexity. Residues Thr-93–Asn-102 are compositionally biased toward polar residues. Over residues Phe-115 to Pro-126 the composition is skewed to basic and acidic residues.

This sequence belongs to the isocyanide synthase family.

The protein operates within secondary metabolite biosynthesis. In terms of biological role, isocyanide synthase; part of the gene cluster that mediates the biosynthesis of the isocyanide xanthocillin and its derivatives. The first step of the pathway consists in the conversion of tyrosine into a vinyl-isonitrile intermediate by the isocyanide synthase xanB. Subsequent oxidative dimerization of this intermediate to form xanthocillin may involve the cytochrome P450 monooxygenase xanG, whose expression is coregulated with that of XanB. Xanthocillin can be further modified by the isonitrile hydratase-like protein xanA which introduces N-formyl groups and the methyltransferase xanE which introduces methyl groups, leading to the production of several derivatives including fumiformamide. Finally, fumiformamide can be subject to both oxidative and reductive cyclization to yield melanocins E and F, respectively. This is Isocyanide synthase xanB from Aspergillus fumigatus (strain ATCC MYA-4609 / CBS 101355 / FGSC A1100 / Af293) (Neosartorya fumigata).